Consider the following 122-residue polypeptide: Acidic phospholipase A2 2 (122 aa).

Cystine bridges form between Cys-26–Cys-115, Cys-28–Cys-44, Cys-43–Cys-95, Cys-49–Cys-122, Cys-50–Cys-88, Cys-57–Cys-81, and Cys-75–Cys-86. Positions 27, 29, and 31 each coordinate Ca(2+). The active site involves His-47. Asp-48 is a Ca(2+) binding site. Asp-89 is a catalytic residue.

This sequence belongs to the phospholipase A2 family. Group II subfamily. D49 sub-subfamily. Ca(2+) serves as cofactor. As to expression, expressed by the venom gland.

The protein localises to the secreted. The enzyme catalyses a 1,2-diacyl-sn-glycero-3-phosphocholine + H2O = a 1-acyl-sn-glycero-3-phosphocholine + a fatty acid + H(+). Functionally, snake venom phospholipase A2 (PLA2) that has high lipolytic activity. PLA2 catalyzes the calcium-dependent hydrolysis of the 2-acyl groups in 3-sn-phosphoglycerides. The protein is Acidic phospholipase A2 2 of Craspedocephalus gramineus (Bamboo pit viper).